We begin with the raw amino-acid sequence, 257 residues long: THAP domain-containing protein 10 (257 aa).

The THAP-type zinc finger occupies 1-90 (MPARCVAAHC…LVAGAVPTLH (90 aa)). Residues 154-168 (QPHADNPSNTVTSVP) show a composition bias toward polar residues. The tract at residues 154 to 178 (QPHADNPSNTVTSVPTHCEEGPVHK) is disordered.

This is THAP domain-containing protein 10 (THAP10) from Homo sapiens (Human).